A 241-amino-acid polypeptide reads, in one-letter code: DNA repair protein RecO (241 aa).

Belongs to the RecO family.

Involved in DNA repair and RecF pathway recombination. The protein is DNA repair protein RecO of Orientia tsutsugamushi (strain Ikeda) (Rickettsia tsutsugamushi).